A 234-amino-acid chain; its full sequence is MDTNNQQPPPSAAGIPPPPPGTTISAAGGGASYHHLLQQQQQQLQLFWTYQRQEIEQVNDFKNHQLPLARIKKIMKADEDVRMISAEAPILFAKACELFILELTIRSWLHAEENKRRTLQKNDIAAAITRTDIFDFLVDIVPRDEIKDEAAVLGGGMVVAPTASGVPYYYPPMGQPAGPGGMMIGRPAMDPNGVYVQPPSQAWQSVWQTSTGTGDDVSYGSGGSSGQGNLDGQG.

Disordered regions lie at residues 1–20 (MDTN…PPPP) and 205–234 (SVWQ…DGQG). Positions 7 to 20 (QPPPSAAGIPPPPP) are enriched in pro residues. Residues 209-219 (TSTGTGDDVSY) are compositionally biased toward low complexity. Positions 220 to 234 (GSGGSSGQGNLDGQG) are enriched in gly residues.

This sequence belongs to the NFYC/HAP5 subunit family. As to quaternary structure, heterotrimeric transcription factor composed of three components, NF-YA, NF-YB and NF-YC. NF-YB and NF-YC must interact and dimerize for NF-YA association and DNA binding. Ubiquitous. Present in etiolated seedlings.

It is found in the nucleus. Its function is as follows. Stimulates the transcription of various genes by recognizing and binding to a CCAAT motif in promoters. The chain is Nuclear transcription factor Y subunit C-1 (NFYC1) from Arabidopsis thaliana (Mouse-ear cress).